A 350-amino-acid chain; its full sequence is Probable arabinogalactan endo-beta-1,4-galactanase A (350 aa).

The N-terminal stretch at 1 to 16 (MIYPLLLSALPLLSSA) is a signal peptide. N-linked (GlcNAc...) asparagine glycosylation is present at N128. The Proton donor role is filled by E152. E262 functions as the Nucleophile in the catalytic mechanism.

Belongs to the glycosyl hydrolase 53 family.

It localises to the secreted. The catalysed reaction is The enzyme specifically hydrolyzes (1-&gt;4)-beta-D-galactosidic linkages in type I arabinogalactans.. In terms of biological role, endogalactanase involved in the degradation of plant cell wall polysaccharides, and more particularly of hairy regions of pectin. The protein is Probable arabinogalactan endo-beta-1,4-galactanase A (galA) of Aspergillus tubingensis.